Here is an 88-residue protein sequence, read N- to C-terminus: Large ribosomal subunit protein bL31B (88 aa).

This sequence belongs to the bacterial ribosomal protein bL31 family. Type B subfamily. As to quaternary structure, part of the 50S ribosomal subunit.

This is Large ribosomal subunit protein bL31B from Bordetella pertussis (strain Tohama I / ATCC BAA-589 / NCTC 13251).